The following is a 272-amino-acid chain: ATP synthase subunit a (272 aa).

5 consecutive transmembrane segments (helical) span residues 41–61 (VLNIDSMFFSLLLGAIFLLIF), 101–121 (LIAPLALTIFVWVFLMNLMDL), 143–165 (VPSADVNITLSMALGVFILILYY), 221–241 (LIFILIAGLLPWWSQWILNVP), and 243–263 (AIFHILIITLQAFIFMVLTIV).

Belongs to the ATPase A chain family. As to quaternary structure, F-type ATPases have 2 components, CF(1) - the catalytic core - and CF(0) - the membrane proton channel. CF(1) has five subunits: alpha(3), beta(3), gamma(1), delta(1), epsilon(1). CF(0) has three main subunits: a(1), b(2) and c(9-12). The alpha and beta chains form an alternating ring which encloses part of the gamma chain. CF(1) is attached to CF(0) by a central stalk formed by the gamma and epsilon chains, while a peripheral stalk is formed by the delta and b chains.

The protein localises to the cell inner membrane. Its function is as follows. Key component of the proton channel; it plays a direct role in the translocation of protons across the membrane. The chain is ATP synthase subunit a from Sodalis glossinidius (strain morsitans).